Consider the following 134-residue polypeptide: MSSAQMDPHDKMRSRDISKVARGQQAPRPAHTPGTVSPPPENEATFRAKRGDSGRETDAAVEERFPVTNETRHCFNRFMQYHKCIEKNGRDANDCNNLRDYVRSICPEELVSKIWLKSGRNKESQGHYQRQYED.

Positions 1 to 61 are disordered; sequence MSSAQMDPHD…DSGRETDAAV (61 aa). 2 stretches are compositionally biased toward basic and acidic residues: residues 7 to 19 and 44 to 61; these read DPHD…DISK and ATFR…DAAV. Residues 71–114 enclose the CHCH domain; the sequence is TRHCFNRFMQYHKCIEKNGRDANDCNNLRDYVRSICPEELVSKI. Positions 74-84 match the Cx9C motif motif; it reads CFNRFMQYHKC. 2 cysteine pairs are disulfide-bonded: Cys74-Cys106 and Cys84-Cys95. The Cx10C motif signature appears at 95-106; it reads CNNLRDYVRSIC.

Belongs to the cytochrome c oxidase subunit 6B (TC 3.D.4.8) family.

The protein localises to the mitochondrion. In terms of biological role, this protein is one of the nuclear-coded polypeptide chains of cytochrome c oxidase, the terminal oxidase in mitochondrial electron transport. This protein may be one of the heme-binding subunits of the oxidase. This chain is Putative cytochrome c oxidase subunit 6b-like, found in Arabidopsis thaliana (Mouse-ear cress).